Consider the following 280-residue polypeptide: Energy-coupling factor transporter ATP-binding protein EcfA1 (280 aa).

Positions 6–241 (LRIENISFQY…SHMLQEIGLD (236 aa)) constitute an ABC transporter domain. 40–47 (GQNGSGKS) contacts ATP.

The protein belongs to the ABC transporter superfamily. Energy-coupling factor EcfA family. Forms a stable energy-coupling factor (ECF) transporter complex composed of 2 membrane-embedded substrate-binding proteins (S component), 2 ATP-binding proteins (A component) and 2 transmembrane proteins (T component).

The protein localises to the cell membrane. ATP-binding (A) component of a common energy-coupling factor (ECF) ABC-transporter complex. Unlike classic ABC transporters this ECF transporter provides the energy necessary to transport a number of different substrates. The sequence is that of Energy-coupling factor transporter ATP-binding protein EcfA1 from Bacillus cereus (strain ATCC 14579 / DSM 31 / CCUG 7414 / JCM 2152 / NBRC 15305 / NCIMB 9373 / NCTC 2599 / NRRL B-3711).